Consider the following 264-residue polypeptide: Ribosomal protein L11 methyltransferase (264 aa).

S-adenosyl-L-methionine is bound by residues T116, G137, D159, and N200.

The protein belongs to the methyltransferase superfamily. PrmA family.

The protein localises to the cytoplasm. The catalysed reaction is L-lysyl-[protein] + 3 S-adenosyl-L-methionine = N(6),N(6),N(6)-trimethyl-L-lysyl-[protein] + 3 S-adenosyl-L-homocysteine + 3 H(+). Methylates ribosomal protein L11. The sequence is that of Ribosomal protein L11 methyltransferase from Thermotoga neapolitana (strain ATCC 49049 / DSM 4359 / NBRC 107923 / NS-E).